A 533-amino-acid chain; its full sequence is Tyrosine-protein kinase transforming protein Fps (533 aa).

The disordered stretch occupies residues alanine 1 to aspartate 46. Residues glutamine 11 to serine 29 are compositionally biased toward polar residues. One can recognise an F-BAR; degenerate domain in the interval methionine 50–serine 124. An SH2 domain is found at tryptophan 171–valine 260. The Protein kinase domain maps to valine 272–leucine 525. ATP contacts are provided by residues isoleucine 278–valine 286 and lysine 301. The Proton acceptor role is filled by aspartate 394. Residue tyrosine 424 is modified to Phosphotyrosine; by autocatalysis.

This sequence belongs to the protein kinase superfamily. Tyr protein kinase family. Fes/fps subfamily.

The catalysed reaction is L-tyrosyl-[protein] + ATP = O-phospho-L-tyrosyl-[protein] + ADP + H(+). The sequence is that of Tyrosine-protein kinase transforming protein Fps (V-FPS) from Gallus gallus (Chicken).